We begin with the raw amino-acid sequence, 284 residues long: uncharacterized protein (284 aa).

N-linked (GlcNAc...) asparagine; by host glycans are attached at residues N79, N102, N111, N147, N162, N174, N196, N211, N228, and N234. A helical membrane pass occupies residues 239–259 (AFTYGSWGVAMLLFAAVMVLV).

The protein belongs to the RL11 family.

The protein localises to the membrane. This is an uncharacterized protein from Human cytomegalovirus (strain AD169) (HHV-5).